Consider the following 511-residue polypeptide: Sterol 14-alpha demethylase resB (511 aa).

Residues 3-23 (ILWIVAYALLAFAASIALNLV) traverse the membrane as a helical segment. A heme-binding site is contributed by C451.

The protein belongs to the cytochrome P450 family. Requires heme as cofactor.

It is found in the membrane. It catalyses the reaction a 14alpha-methyl steroid + 3 reduced [NADPH--hemoprotein reductase] + 3 O2 = a Delta(14) steroid + formate + 3 oxidized [NADPH--hemoprotein reductase] + 4 H2O + 4 H(+). The catalysed reaction is a 14alpha-methyl steroid + reduced [NADPH--hemoprotein reductase] + O2 = a 14alpha-hydroxymethyl steroid + oxidized [NADPH--hemoprotein reductase] + H2O + H(+). It carries out the reaction a 14alpha-hydroxymethyl steroid + reduced [NADPH--hemoprotein reductase] + O2 = a 14alpha-formyl steroid + oxidized [NADPH--hemoprotein reductase] + 2 H2O + H(+). The enzyme catalyses a 14alpha-formyl steroid + reduced [NADPH--hemoprotein reductase] + O2 = a Delta(14) steroid + formate + oxidized [NADPH--hemoprotein reductase] + H2O + 2 H(+). It catalyses the reaction lanosterol + 3 reduced [NADPH--hemoprotein reductase] + 3 O2 = 4,4-dimethyl-5alpha-cholesta-8,14,24-trien-3beta-ol + formate + 3 oxidized [NADPH--hemoprotein reductase] + 4 H2O + 4 H(+). The catalysed reaction is lanosterol + reduced [NADPH--hemoprotein reductase] + O2 = 32-hydroxylanosterol + oxidized [NADPH--hemoprotein reductase] + H2O + H(+). It carries out the reaction 32-hydroxylanosterol + reduced [NADPH--hemoprotein reductase] + O2 = 32-oxolanosterol + oxidized [NADPH--hemoprotein reductase] + 2 H2O + H(+). The enzyme catalyses 32-oxolanosterol + reduced [NADPH--hemoprotein reductase] + O2 = 4,4-dimethyl-5alpha-cholesta-8,14,24-trien-3beta-ol + formate + oxidized [NADPH--hemoprotein reductase] + H2O + 2 H(+). It catalyses the reaction eburicol + 3 reduced [NADPH--hemoprotein reductase] + 3 O2 = 14-demethyleburicol + formate + 3 oxidized [NADPH--hemoprotein reductase] + 4 H2O + 4 H(+). The catalysed reaction is eburicol + reduced [NADPH--hemoprotein reductase] + O2 = 32-hydroxyeburicol + oxidized [NADPH--hemoprotein reductase] + H2O + H(+). It carries out the reaction 32-hydroxyeburicol + reduced [NADPH--hemoprotein reductase] + O2 = 32-oxoeburicol + oxidized [NADPH--hemoprotein reductase] + 2 H2O + H(+). The enzyme catalyses 32-oxoeburicol + reduced [NADPH--hemoprotein reductase] + O2 = 14-demethyleburicol + formate + oxidized [NADPH--hemoprotein reductase] + H2O + 2 H(+). Functionally, sterol 14-alpha demethylase; part of the gene cluster that mediates the biosynthesis of the tetrahydropyranyl antifungal agent restricticin that acts as an inhibitor of CYP51 and blocks the ergosterol biosynthesis. Sterol 14-alpha-demethylase plays a critical role in the biosynthesis of ergosterol, the major sterol component in fungal membranes that participates in a variety of functions. ResB acts as a self-resistant CYP51 that contains mutations found in CYP51s isolated from azole resistance strains and that is not inhibited by the final product of the cluster, restricticin. The sequence is that of Sterol 14-alpha demethylase resB from Aspergillus sclerotiorum.